We begin with the raw amino-acid sequence, 137 residues long: Urease subunit beta (137 aa).

Residues 118 to 137 (IIAEENKVSENANKESGYNR) are disordered. Residues 126-137 (SENANKESGYNR) show a composition bias toward polar residues.

The protein belongs to the urease beta subunit family. Heterotrimer of UreA (gamma), UreB (beta) and UreC (alpha) subunits. Three heterotrimers associate to form the active enzyme.

The protein resides in the cytoplasm. It carries out the reaction urea + 2 H2O + H(+) = hydrogencarbonate + 2 NH4(+). It functions in the pathway nitrogen metabolism; urea degradation; CO(2) and NH(3) from urea (urease route): step 1/1. In Staphylococcus xylosus, this protein is Urease subunit beta.